The sequence spans 152 residues: Deoxyuridine 5'-triphosphate nucleotidohydrolase (152 aa).

Residues 72–74 (RSG), asparagine 85, and 89–91 (TID) contribute to the substrate site.

The protein belongs to the dUTPase family. It depends on Mg(2+) as a cofactor.

It catalyses the reaction dUTP + H2O = dUMP + diphosphate + H(+). The protein operates within pyrimidine metabolism; dUMP biosynthesis; dUMP from dCTP (dUTP route): step 2/2. Its function is as follows. This enzyme is involved in nucleotide metabolism: it produces dUMP, the immediate precursor of thymidine nucleotides and it decreases the intracellular concentration of dUTP so that uracil cannot be incorporated into DNA. This Rhodopseudomonas palustris (strain BisB18) protein is Deoxyuridine 5'-triphosphate nucleotidohydrolase.